The sequence spans 359 residues: Short chain dehydrogenase resG (359 aa).

K87, D110, N137, Y237, and K241 together coordinate NADP(+). The Proton donor role is filled by Y237. The active-site Lowers pKa of active site Tyr is K241.

The protein belongs to the short-chain dehydrogenases/reductases (SDR) family.

Its pathway is antifungal biosynthesis. Its function is as follows. Short chain dehydrogenase; part of the gene cluster that mediates the biosynthesis of the tetrahydropyranyl antifungal agent restricticin that acts as an inhibitor of CYP51 and blocks the ergosterol biosynthesis. The highly reducing polyketide synthase resH, the short chain dehydrogenase resG, the cyclase resF, the FAD-dependent monooxygenase resA and the enoylreductase resD are required to generate the first stable intermediate desmethylrestrictinol. ResH with resD biosynthesize the first polyketide chain intermediate that is reduced by resG, followed by epoxidation by resA before 6-endo cyclization via epoxide opening by resF leads to desmethylrestrictinol. The methyltransferase resE then catalyzes the C4 O-methylation of desmethylrestrictinol to produce restrictinol, and the nonribosomal peptide synthetase resC catalyzes the C3 esterification of restrictinol with glycine that leads to restricticin. This is Short chain dehydrogenase resG from Aspergillus sclerotiorum.